A 492-amino-acid chain; its full sequence is GlcNAc-binding protein A (492 aa).

A signal peptide spans 1–23; sequence MNKSSTKTLIALSMMAVSSGVSA. Positions 24 to 204 constitute a Chitin-binding type-4 domain; the sequence is HGYVSETNDG…AFYNVIDVKF (181 aa). In terms of domain architecture, Chitin-binding type-3 spans 443 to 484; sequence AGTKVLAEDSNVYQCKEFPYSGYCVQWTETATNFAPGVGSDW.

Belongs to the GbpA family.

It localises to the secreted. Its function is as follows. Probably interacts with GlcNAc residues. May promote attachment to both epithelial cell surfaces and chitin. The chain is GlcNAc-binding protein A from Aliivibrio fischeri (strain MJ11) (Vibrio fischeri).